Reading from the N-terminus, the 549-residue chain is Cytoplasmic trehalase (549 aa).

Substrate contacts are provided by residues arginine 168, 175-176 (WD), asparagine 212, 221-223 (RSQ), 292-294 (RDE), and glycine 324. Catalysis depends on proton donor/acceptor residues aspartate 326 and glutamate 509. Glutamate 525 contributes to the substrate binding site.

It belongs to the glycosyl hydrolase 37 family. In terms of assembly, monomer.

The protein resides in the cytoplasm. The enzyme catalyses alpha,alpha-trehalose + H2O = alpha-D-glucose + beta-D-glucose. Its pathway is glycan degradation; trehalose degradation; D-glucose from alpha,alpha-trehalose: step 1/1. Its function is as follows. Hydrolyzes trehalose to glucose. Could be involved, in cells returning to low osmolarity conditions, in the utilization of the accumulated cytoplasmic trehalose, which was synthesized in response to high osmolarity. This chain is Cytoplasmic trehalase, found in Salmonella choleraesuis (strain SC-B67).